Consider the following 464-residue polypeptide: Glucose-6-phosphate isomerase (464 aa).

The active-site Proton donor is glutamate 290. Catalysis depends on residues histidine 319 and lysine 433.

The protein belongs to the GPI family.

It is found in the cytoplasm. It catalyses the reaction alpha-D-glucose 6-phosphate = beta-D-fructose 6-phosphate. It functions in the pathway carbohydrate biosynthesis; gluconeogenesis. It participates in carbohydrate degradation; glycolysis; D-glyceraldehyde 3-phosphate and glycerone phosphate from D-glucose: step 2/4. Functionally, catalyzes the reversible isomerization of glucose-6-phosphate to fructose-6-phosphate. The protein is Glucose-6-phosphate isomerase of Carboxydothermus hydrogenoformans (strain ATCC BAA-161 / DSM 6008 / Z-2901).